The chain runs to 154 residues: Myoglobin (154 aa).

The Globin domain maps to 2–148 (GLSDGEWQLV…FRNDMAAKYK (147 aa)). Ser-4 bears the Phosphoserine mark. A nitrite-binding site is contributed by His-65. Position 65 (His-65) interacts with O2. The residue at position 68 (Thr-68) is a Phosphothreonine. Position 94 (His-94) interacts with heme b.

It belongs to the globin family. As to quaternary structure, monomeric.

Its subcellular location is the cytoplasm. The protein localises to the sarcoplasm. The enzyme catalyses Fe(III)-heme b-[protein] + nitric oxide + H2O = Fe(II)-heme b-[protein] + nitrite + 2 H(+). It catalyses the reaction H2O2 + AH2 = A + 2 H2O. Its function is as follows. Monomeric heme protein which primary function is to store oxygen and facilitate its diffusion within muscle tissues. Reversibly binds oxygen through a pentacoordinated heme iron and enables its timely and efficient release as needed during periods of heightened demand. Depending on the oxidative conditions of tissues and cells, and in addition to its ability to bind oxygen, it also has a nitrite reductase activity whereby it regulates the production of bioactive nitric oxide. Under stress conditions, like hypoxia and anoxia, it also protects cells against reactive oxygen species thanks to its pseudoperoxidase activity. The sequence is that of Myoglobin (MB) from Callithrix jacchus (White-tufted-ear marmoset).